The chain runs to 239 residues: Phosducin-like protein 3 (239 aa).

Positions 16–37 (KKGILPPKETPVEEEEDEQLHL) are disordered. The region spanning 28–201 (EEEEDEQLHL…LEWRLSESGA (174 aa)) is the Phosducin domain. At serine 41 the chain carries Phosphoserine. The segment at 89-239 (FGELKEISGQ…RDGEEDSDED (151 aa)) is thioredoxin fold. Residues 217 to 227 (QLMTSIRCSAN) show a composition bias toward polar residues. The segment at 217-239 (QLMTSIRCSANTHRDGEEDSDED) is disordered.

It belongs to the phosducin family. In terms of assembly, interacts (via thioredoxin fold region) with kdr/vegfr2 (via juxtamembrane domain). Expressed in endothelial cells.

It localises to the cytoplasm. Its subcellular location is the perinuclear region. The protein localises to the endoplasmic reticulum. In terms of biological role, acts as a chaperone for the angiogenic VEGF receptor KDR/VEGFR2, increasing its abundance by inhibiting its ubiquitination and degradation. Inhibits the folding activity of the chaperonin-containing T-complex (CCT) which leads to inhibition of cytoskeletal actin folding. Acts as a chaperone during heat shock alongside HSP90 and HSP40/70 chaperone complexes. Modulates the activation of caspases during apoptosis. The polypeptide is Phosducin-like protein 3 (Danio rerio (Zebrafish)).